The following is a 206-amino-acid chain: Small ribosomal subunit protein eS1 (206 aa).

This sequence belongs to the eukaryotic ribosomal protein eS1 family.

The chain is Small ribosomal subunit protein eS1 from Halobacterium salinarum (strain ATCC 29341 / DSM 671 / R1).